An 811-amino-acid polypeptide reads, in one-letter code: G-type lectin S-receptor-like serine/threonine-protein kinase LECRK3 (811 aa).

Positions 1-23 (MAHLLFLPILQLLLLYCTKSAQA) are cleaved as a signal peptide. Residues 24-153 (QLNISIGSSL…DGATKWESFG (130 aa)) form the Bulb-type lectin domain. Residues 24 to 464 (QLNISIGSSL…DKKYWILGSS (441 aa)) are Extracellular-facing. 7 N-linked (GlcNAc...) asparagine glycosylation sites follow: Asn-26, Asn-39, Asn-59, Asn-219, Asn-226, Asn-237, and Asn-242. The EGF-like; atypical domain occupies 292–344 (PENICQSIQTMVGSGACGFNSYCTIDGTKNTTSCLCPQNYKFIDDKRKYKGCR). Intrachain disulfides connect Cys-296/Cys-314, Cys-308/Cys-325, Cys-327/Cys-343, Cys-389/Cys-411, and Cys-393/Cys-399. N-linked (GlcNAc...) asparagine glycosylation is present at Asn-321. The 79-residue stretch at 352-430 (CDLDETTAML…GKMDVNVPRT (79 aa)) folds into the PAN domain. Residues 465–485 (LLFGSSVLVNFLLISVMLFGT) form a helical membrane-spanning segment. Topologically, residues 486 to 811 (YCSITSRKKI…DPSSYISSLA (326 aa)) are cytoplasmic. Positions 521 to 795 (GGFQEVLGTG…KVTQMLDGAV (275 aa)) constitute a Protein kinase domain. ATP-binding positions include 527–535 (LGTGASGVV) and Lys-551. The Proton acceptor role is filled by Asp-645.

It belongs to the protein kinase superfamily. Ser/Thr protein kinase family.

Its subcellular location is the membrane. It catalyses the reaction L-seryl-[protein] + ATP = O-phospho-L-seryl-[protein] + ADP + H(+). The enzyme catalyses L-threonyl-[protein] + ATP = O-phospho-L-threonyl-[protein] + ADP + H(+). Involved in resistance against the herbivorous insect brown planthopper (N.lugens, BPH). Member of the BPH3 (BPH resistance locus 3) cluster which contains LECRK1, LECRK2 and LECRK3. The polypeptide is G-type lectin S-receptor-like serine/threonine-protein kinase LECRK3 (Oryza sativa subsp. indica (Rice)).